Reading from the N-terminus, the 113-residue chain is MARLNRHPQSNIAYAVRSLRSKGQLITNSAPTQNASTDALAVNIDHRAILTVPSYRSSVRVFQRSPCLHRAEGLLSPYCNRGSERTNQGNRGSAPSKILLPRTIADPFRGGPE.

Residues 78–113 (YCNRGSERTNQGNRGSAPSKILLPRTIADPFRGGPE) are disordered.

This is an uncharacterized protein from Halobacterium phage phiH (Bacteriophage phi-H).